The following is a 408-amino-acid chain: Succinylornithine transaminase (408 aa).

Residue K252 is modified to N6-(pyridoxal phosphate)lysine.

The protein belongs to the class-III pyridoxal-phosphate-dependent aminotransferase family. AstC subfamily. The cofactor is pyridoxal 5'-phosphate.

The catalysed reaction is N(2)-succinyl-L-ornithine + 2-oxoglutarate = N-succinyl-L-glutamate 5-semialdehyde + L-glutamate. The protein operates within amino-acid degradation; L-arginine degradation via AST pathway; L-glutamate and succinate from L-arginine: step 3/5. Functionally, catalyzes the transamination of N(2)-succinylornithine and alpha-ketoglutarate into N(2)-succinylglutamate semialdehyde and glutamate. Can also act as an acetylornithine aminotransferase. The chain is Succinylornithine transaminase from Salmonella paratyphi A (strain ATCC 9150 / SARB42).